A 354-amino-acid polypeptide reads, in one-letter code: Glutamine synthetase cytosolic isozyme 1-3 (354 aa).

Ser-2 is modified (N-acetylserine). Phosphoserine occurs at positions 2 and 48. In terms of domain architecture, GS beta-grasp spans 19–99 (IIAEYIWIGG…VMCDAYTPAG (81 aa)). One can recognise a GS catalytic domain in the interval 106-354 (KRHNAAKIFS…SMIAETTILG (249 aa)).

The protein belongs to the glutamine synthetase family. In terms of assembly, homooctamer. In terms of tissue distribution, expressed in the pericycle in the region of mature root.

It localises to the cytoplasm. It carries out the reaction L-glutamate + NH4(+) + ATP = L-glutamine + ADP + phosphate + H(+). Functionally, low-affinity glutamine synthetase. May contribute to the homeostatic control of glutamine synthesis in roots. The polypeptide is Glutamine synthetase cytosolic isozyme 1-3 (GLN1-3) (Arabidopsis thaliana (Mouse-ear cress)).